The primary structure comprises 237 residues: (5-formylfuran-3-yl)methyl phosphate synthase (237 aa).

The active-site Schiff-base intermediate with substrate is Lys27. The active-site Proton acceptor is the Lys85.

This sequence belongs to the MfnB family.

It carries out the reaction 2 D-glyceraldehyde 3-phosphate = 4-(hydroxymethyl)-2-furancarboxaldehyde phosphate + phosphate + 2 H2O. Its pathway is cofactor biosynthesis; methanofuran biosynthesis. In terms of biological role, catalyzes the formation of 4-(hydroxymethyl)-2-furancarboxaldehyde phosphate (4-HFC-P) from two molecules of glyceraldehyde-3-P (GA-3-P). In Methanobrevibacter smithii (strain ATCC 35061 / DSM 861 / OCM 144 / PS), this protein is (5-formylfuran-3-yl)methyl phosphate synthase.